The following is a 319-amino-acid chain: MDIVQILSIIVPATLVYAAPLILTALGGVFSERSGVVNIGLEGLMIIGAFTSVLFNLFFGQELGAAAPWLSLLAAMAAGALFSLIHAAAAISFRADQTVSGVAINMLALGATLFIVKLIYGKAQTDKIPEPFYKTKIPGLGDIPVLGKIFFSDVYYTSILAIALAFISWFILFKTPFGLRIRSVGEHPMAADTMGINVYKMRYIGVMISGLFGGLGGGVYASTIALDFTHSTISGQGFIALAALVFGKWHPIGALGAALFFGFAQSLSIIGSLLPLFKDIPNVYMLMAPYILTILALTGFIGRADAPKANGVPYIKGKR.

9 helical membrane-spanning segments follow: residues 6–26 (ILSI…LTAL), 39–59 (IGLE…NLFF), 65–85 (AAAP…FSLI), 99–119 (VSGV…VKLI), 159–179 (ILAI…PFGL), 204–224 (IGVM…ASTI), 235–255 (GQGF…IGAL), 257–277 (AALF…LPLF), and 282–302 (NVYM…GFIG).

The protein belongs to the binding-protein-dependent transport system permease family. As to quaternary structure, the complex is composed of two ATP-binding proteins (NupO), two transmembrane proteins (NupP and NupQ) and a solute-binding protein (NupN).

It is found in the cell membrane. Part of an ABC transporter complex involved in the uptake of guanosine. Responsible for the translocation of the substrate across the membrane. May be a nucleoside transporter of broad specificity but with various affinities for different substrates. This chain is Guanosine ABC transporter permease protein NupQ, found in Bacillus subtilis (strain 168).